The primary structure comprises 1615 residues: Mediator of RNA polymerase II transcription subunit 23 (1615 aa).

2 disordered regions span residues 40-67 (RQKP…DLPP) and 1230-1270 (SSSS…NASE). Over residues 41–51 (QKPDESLRDPP) the composition is skewed to basic and acidic residues. Over residues 1230-1241 (SSSSNCSSRSGS) the composition is skewed to low complexity.

It belongs to the Mediator complex subunit 23 family. Component of the Mediator complex.

Its subcellular location is the nucleus. Functionally, component of the Mediator complex, a coactivator involved in the regulated transcription of nearly all RNA polymerase II-dependent genes. Mediator functions as a bridge to convey information from gene-specific regulatory proteins to the basal RNA polymerase II transcription machinery. The Mediator complex, having a compact conformation in its free form, is recruited to promoters by direct interactions with regulatory proteins and serves for the assembly of a functional preinitiation complex with RNA polymerase II and the general transcription factors. This chain is Mediator of RNA polymerase II transcription subunit 23 (MED23), found in Arabidopsis thaliana (Mouse-ear cress).